A 339-amino-acid chain; its full sequence is tRNA-specific 2-thiouridylase MnmA (339 aa).

ATP contacts are provided by residues 6–13 (AMSGGVDS) and Met-32. Catalysis depends on Cys-92, which acts as the Nucleophile. The cysteines at positions 92 and 186 are disulfide-linked. Gly-116 is a binding site for ATP. Positions 134-136 (KDQ) are interaction with tRNA. Cys-186 (cysteine persulfide intermediate) is an active-site residue. Residues 288 to 289 (RY) are interaction with tRNA.

The protein belongs to the MnmA/TRMU family.

It localises to the cytoplasm. It catalyses the reaction S-sulfanyl-L-cysteinyl-[protein] + uridine(34) in tRNA + AH2 + ATP = 2-thiouridine(34) in tRNA + L-cysteinyl-[protein] + A + AMP + diphosphate + H(+). Catalyzes the 2-thiolation of uridine at the wobble position (U34) of tRNA, leading to the formation of s(2)U34. The chain is tRNA-specific 2-thiouridylase MnmA from Campylobacter curvus (strain 525.92).